Reading from the N-terminus, the 394-residue chain is Flagellin B (394 aa).

The protein belongs to the bacterial flagellin family.

It localises to the secreted. It is found in the bacterial flagellum. In terms of biological role, flagellin is the subunit protein which polymerizes to form the filaments of bacterial flagella. The chain is Flagellin B (flaB) from Rhizobium meliloti (strain 1021) (Ensifer meliloti).